A 621-amino-acid chain; its full sequence is F-box only protein 21 (621 aa).

The 50-residue stretch at 28–77 (SCLVNLPGEVLEYILCCGSLTAADIGRVSSTCRRLRELCQSSGKVWKEQF) folds into the F-box domain.

In terms of assembly, interacts with SKP1 and CUL1.

Its function is as follows. Substrate-recognition component of the SCF (SKP1-CUL1-F-box protein)-type E3 ubiquitin ligase complex. This is F-box only protein 21 (FBXO21) from Pongo abelii (Sumatran orangutan).